The chain runs to 634 residues: Threonine--tRNA ligase (634 aa).

In terms of domain architecture, TGS spans 1–61 (MINIRFPDGS…NSNCELRLIT (61 aa)). Positions 241–532 (DHRKIGKVLD…LIEHYAGNLP (292 aa)) are catalytic. Zn(2+) contacts are provided by Cys-332, His-383, and His-509.

Belongs to the class-II aminoacyl-tRNA synthetase family. Homodimer. It depends on Zn(2+) as a cofactor.

It is found in the cytoplasm. It carries out the reaction tRNA(Thr) + L-threonine + ATP = L-threonyl-tRNA(Thr) + AMP + diphosphate + H(+). Its function is as follows. Catalyzes the attachment of threonine to tRNA(Thr) in a two-step reaction: L-threonine is first activated by ATP to form Thr-AMP and then transferred to the acceptor end of tRNA(Thr). Also edits incorrectly charged L-seryl-tRNA(Thr). The protein is Threonine--tRNA ligase of Francisella tularensis subsp. mediasiatica (strain FSC147).